Reading from the N-terminus, the 169-residue chain is Small ribosomal subunit protein uS5 (169 aa).

The S5 DRBM domain maps to 14 to 77; it reads LQEKLVAVRR…EQARKNMRKV (64 aa).

This sequence belongs to the universal ribosomal protein uS5 family. Part of the 30S ribosomal subunit. Contacts proteins S4 and S8.

With S4 and S12 plays an important role in translational accuracy. Its function is as follows. Located at the back of the 30S subunit body where it stabilizes the conformation of the head with respect to the body. The protein is Small ribosomal subunit protein uS5 of Methylococcus capsulatus (strain ATCC 33009 / NCIMB 11132 / Bath).